We begin with the raw amino-acid sequence, 208 residues long: Protein-L-isoaspartate O-methyltransferase (208 aa).

The active site involves serine 59.

This sequence belongs to the methyltransferase superfamily. L-isoaspartyl/D-aspartyl protein methyltransferase family.

It is found in the cytoplasm. It catalyses the reaction [protein]-L-isoaspartate + S-adenosyl-L-methionine = [protein]-L-isoaspartate alpha-methyl ester + S-adenosyl-L-homocysteine. Functionally, catalyzes the methyl esterification of L-isoaspartyl residues in peptides and proteins that result from spontaneous decomposition of normal L-aspartyl and L-asparaginyl residues. It plays a role in the repair and/or degradation of damaged proteins. This is Protein-L-isoaspartate O-methyltransferase from Escherichia fergusonii (strain ATCC 35469 / DSM 13698 / CCUG 18766 / IAM 14443 / JCM 21226 / LMG 7866 / NBRC 102419 / NCTC 12128 / CDC 0568-73).